The chain runs to 124 residues: Large ribosomal subunit protein bL12 (124 aa).

It belongs to the bacterial ribosomal protein bL12 family. As to quaternary structure, homodimer. Part of the ribosomal stalk of the 50S ribosomal subunit. Forms a multimeric L10(L12)X complex, where L10 forms an elongated spine to which 2 to 4 L12 dimers bind in a sequential fashion. Binds GTP-bound translation factors.

Forms part of the ribosomal stalk which helps the ribosome interact with GTP-bound translation factors. Is thus essential for accurate translation. The chain is Large ribosomal subunit protein bL12 from Phocaeicola vulgatus (strain ATCC 8482 / DSM 1447 / JCM 5826 / CCUG 4940 / NBRC 14291 / NCTC 11154) (Bacteroides vulgatus).